The following is a 171-amino-acid chain: Peptide deformylase (171 aa).

Residues Cys-91 and His-133 each coordinate Fe cation. Glu-134 is an active-site residue. Residue His-137 participates in Fe cation binding.

This sequence belongs to the polypeptide deformylase family. It depends on Fe(2+) as a cofactor.

It carries out the reaction N-terminal N-formyl-L-methionyl-[peptide] + H2O = N-terminal L-methionyl-[peptide] + formate. Its function is as follows. Removes the formyl group from the N-terminal Met of newly synthesized proteins. Requires at least a dipeptide for an efficient rate of reaction. N-terminal L-methionine is a prerequisite for activity but the enzyme has broad specificity at other positions. This chain is Peptide deformylase, found in Sodalis glossinidius (strain morsitans).